Consider the following 106-residue polypeptide: MEYIYASLLLHSAKKEISEDALKNVLTAAGISVDEVRLKAVVAALKEVNIDEVLKNAAAMPVAVAAQPQATQAQPAAEEKKEEKKEEEKKGPSEEEIASGLASLFG.

Low complexity predominate over residues 66–76 (AQPQATQAQPA). The segment at 66–106 (AQPQATQAQPAAEEKKEEKKEEEKKGPSEEEIASGLASLFG) is disordered. Residues 77 to 93 (AEEKKEEKKEEEKKGPS) show a composition bias toward basic and acidic residues.

The protein belongs to the eukaryotic ribosomal protein P1/P2 family. As to quaternary structure, part of the 50S ribosomal subunit. Homodimer, it forms part of the ribosomal stalk which helps the ribosome interact with GTP-bound translation factors. Forms a heptameric uL10/P0(P1)2(P1)2(P1)2 complex, where uL10/P0 forms an elongated spine to which the P1 dimers bind in a sequential fashion.

Its function is as follows. Forms part of the ribosomal stalk, playing a central role in the interaction of the ribosome with GTP-bound translation factors. The sequence is that of Large ribosomal subunit protein P1 from Saccharolobus solfataricus (strain ATCC 35092 / DSM 1617 / JCM 11322 / P2) (Sulfolobus solfataricus).